The sequence spans 361 residues: Protein TIFY 8 (361 aa).

4 disordered regions span residues 53–78, 113–134, 190–232, and 268–361; these read NKAA…GLSS, RFSG…HPET, QTAA…RKDL, and SGGS…KEAT. A compositionally biased stretch (low complexity) spans 56–78; the sequence is AKAAMTPSTASASSAGGLGGLSS. 2 stretches are compositionally biased toward polar residues: residues 113 to 127 and 208 to 232; these read RFSG…SHFT and SSFT…RKDL. Positions 232–267 constitute a Tify domain; it reads LASSTKQMTIFYGGQAHVFDDVHPNKADVIMALAGS. Residues 333–361 are compositionally biased toward basic and acidic residues; that stretch reads GREHQGSIISRGRDIRDPVHRSDPEKEAT.

Belongs to the TIFY/JAZ family. As to quaternary structure, interacts with AFPH2/NINJA. Ubiquitinated. Targeted for degradation by the SCF(COI1) E3 ubiquitin ligase-proteasome pathway during jasmonate signaling.

It is found in the nucleus. Functionally, repressor of jasmonate responses. The chain is Protein TIFY 8 from Arabidopsis thaliana (Mouse-ear cress).